We begin with the raw amino-acid sequence, 161 residues long: Ubiquitin-conjugating enzyme E2Q-like protein 1 (161 aa).

The 154-residue stretch at 1–154 (MKELQDIARL…VKTHEKYGWV (154 aa)) folds into the UBC core domain. Residue Cys88 is the Glycyl thioester intermediate of the active site.

This sequence belongs to the ubiquitin-conjugating enzyme family. As to quaternary structure, interacts with FBXW7.

The protein localises to the nucleus. The catalysed reaction is S-ubiquitinyl-[E1 ubiquitin-activating enzyme]-L-cysteine + [E2 ubiquitin-conjugating enzyme]-L-cysteine = [E1 ubiquitin-activating enzyme]-L-cysteine + S-ubiquitinyl-[E2 ubiquitin-conjugating enzyme]-L-cysteine.. It functions in the pathway protein modification; protein ubiquitination. Its function is as follows. Probable E2 ubiquitin-protein ligase that catalyzes the covalent attachment of ubiquitin to target proteins. May facilitate the monoubiquitination and degradation of MTOR and CCNE1 through interaction with FBXW7. This is Ubiquitin-conjugating enzyme E2Q-like protein 1 (Ube2ql1) from Mus musculus (Mouse).